Consider the following 2873-residue polypeptide: Fibrillin-1 (2873 aa).

A signal peptide spans 1 to 24 (MRRGGLLEVALAFALLLESYTSHG). Positions 25–44 (ADANLEAGSLKETRANRAKR) are excised as a propeptide. Residues 45 to 81 (RGGGGHDALKGPNVCGSRYNAYCCPGWKTLPGGNQCI) are fibrillin unique N-terminal (FUN) domain. The tract at residues 45-452 (RGGGGHDALK…PPRVLPFNVT (408 aa)) is N-terminal domain. Cystine bridges form between cysteine 59/cysteine 68, cysteine 67/cysteine 80, cysteine 85/cysteine 94, cysteine 89/cysteine 100, cysteine 102/cysteine 111, cysteine 119/cysteine 129, cysteine 123/cysteine 134, cysteine 136/cysteine 145, cysteine 150/cysteine 160, cysteine 154/cysteine 166, and cysteine 168/cysteine 177. 3 EGF-like domains span residues 81–112 (IVPI…PSCG), 115–146 (SIQH…THCG), and 147–178 (QPVC…PQCE). The interval 119–329 (CSIRCMNGGS…YTSPDGTRCV (211 aa)) is interaction with MFAP4. The 53-residue stretch at 184–236 (GPCFTVVSNQMCQGQLSGIVCTKTLCCATVGRAWGHPCEMCPAQPHPCRRGFI) folds into the TB 1 domain. The interval 195 to 221 (CQGQLSGIVCTKTLCCATVGRAWGHPC) is hybrid domain 1. The EGF-like 4; calcium-binding domain maps to 246–287 (DVDECQAIPGMCQGGNCINTVGSFECKCPAGHKFNEVSQKCE). Cystine bridges form between cysteine 250–cysteine 262, cysteine 257–cysteine 271, cysteine 273–cysteine 286, cysteine 292–cysteine 304, cysteine 299–cysteine 313, and cysteine 315–cysteine 328. The O-linked (Glc) serine glycan is linked to serine 268. The EGF-like 5; calcium-binding domain occupies 288-329 (DIDECSTIPGVCDGGECTNTVSSYFCKCPPGFYTSPDGTRCV). One can recognise a TB 2 domain in the interval 334–389 (GYCYTALANGRCSNQLPQSITKMQCCCDLGRCWSPGVTVAPEMCPIRSTEDFNKLC). N-linked (GlcNAc...) asparagine glycosylation occurs at asparagine 450. Positions 451–491 (VTDYCQLVRYLCQNGRCIPTPGSYRCECNKGFQLDIRGECI) constitute an EGF-like 6 domain. Disulfide bonds link cysteine 455-cysteine 467, cysteine 462-cysteine 476, cysteine 478-cysteine 490, cysteine 496-cysteine 506, cysteine 501-cysteine 515, cysteine 517-cysteine 530, cysteine 536-cysteine 548, cysteine 543-cysteine 557, cysteine 559-cysteine 572, cysteine 578-cysteine 589, cysteine 584-cysteine 598, cysteine 600-cysteine 613, cysteine 619-cysteine 630, cysteine 625-cysteine 639, and cysteine 641-cysteine 654. O-linked (Glc) serine glycosylation is present at serine 473. The region spanning 492-531 (DVDECEKNPCTGGECINNQGSYTCHCRAGYQSTLTRTECR) is the EGF-like 7; calcium-binding domain. Serine 512 is a glycosylation site (O-linked (Glc) serine). Positions 532 to 573 (DIDECLQNGRICNNGRCINTDGSFHCVCNAGFHVTRDGKNCE) constitute an EGF-like 8; calcium-binding domain. In terms of domain architecture, EGF-like 9; calcium-binding spans 574–614 (DMDECSIRNMCLNGMCINEDGSFKCICKPGFQLASDGRYCK). Positions 615–655 (DINECETPGICMNGRCVNTDGSYRCECFPGLAVGLDGRVCV) constitute an EGF-like 10; calcium-binding domain. The region spanning 661–713 (STCYGGYRRGQCVKPLFGAVTKSECCCASTEYAFGEPCQPCPAQNSAEYQALC) is the TB 3 domain. The region spanning 725–766 (DINECALDPDICPNGICENLRGTYKCICNSGYEVDITGKNCV) is the EGF-like 11; calcium-binding domain. Intrachain disulfides connect cysteine 729–cysteine 741, cysteine 736–cysteine 750, cysteine 752–cysteine 765, cysteine 771–cysteine 783, cysteine 778–cysteine 792, cysteine 794–cysteine 807, cysteine 813–cysteine 823, cysteine 818–cysteine 832, cysteine 834–cysteine 847, cysteine 855–cysteine 877, cysteine 864–cysteine 889, cysteine 878–cysteine 892, cysteine 898–cysteine 910, cysteine 916–cysteine 928, cysteine 923–cysteine 937, and cysteine 939–cysteine 952. The region spanning 767 to 808 (DINECVLNSLLCDNGQCRNTPGSFVCTCPKGFVYKPDLKTCE) is the EGF-like 12; calcium-binding domain. Residues 809–848 (DIDECESSPCINGVCKNSPGSFICECSPESTLDPTKTICI) enclose the EGF-like 13; calcium-binding domain. Residues 853–904 (GTCWQTVIDGRCEININGATLKSECCSSLGAAWGSPCTICQLDPICGKGFSR) form the TB 4 domain. The tract at residues 862-887 (GRCEININGATLKSECCSSLGAAWGS) is hybrid domain 2. The EGF-like 14; calcium-binding domain occupies 912–953 (DINECEVFPGVCKNGLCVNSRGSFKCECPNGMTLDATGRICL). The TB 5 domain maps to 958–1010 (ETCFLKYDDEECTLPIAGRHRMDACCCSVGAAWGTEECEECPLRNSREYEELC). Residues 1030–1071 (DINECKMIPSLCTHGKCRNTIGSFKCRCDSGFALDSEERNCT) enclose the EGF-like 15; calcium-binding domain. Intrachain disulfides connect cysteine 1034-cysteine 1046, cysteine 1041-cysteine 1055, cysteine 1057-cysteine 1070, cysteine 1076-cysteine 1088, cysteine 1083-cysteine 1097, cysteine 1099-cysteine 1113, cysteine 1119-cysteine 1131, cysteine 1126-cysteine 1140, cysteine 1142-cysteine 1155, cysteine 1161-cysteine 1173, cysteine 1168-cysteine 1182, cysteine 1184-cysteine 1197, cysteine 1203-cysteine 1214, cysteine 1210-cysteine 1223, cysteine 1225-cysteine 1238, cysteine 1244-cysteine 1256, cysteine 1251-cysteine 1265, cysteine 1267-cysteine 1280, cysteine 1286-cysteine 1298, cysteine 1293-cysteine 1307, cysteine 1309-cysteine 1322, cysteine 1328-cysteine 1341, cysteine 1335-cysteine 1350, cysteine 1352-cysteine 1363, cysteine 1369-cysteine 1382, cysteine 1376-cysteine 1391, cysteine 1393-cysteine 1404, cysteine 1410-cysteine 1422, cysteine 1417-cysteine 1431, cysteine 1433-cysteine 1446, cysteine 1452-cysteine 1463, cysteine 1458-cysteine 1472, cysteine 1474-cysteine 1487, cysteine 1493-cysteine 1504, cysteine 1499-cysteine 1513, cysteine 1515-cysteine 1528, cysteine 1536-cysteine 1564, cysteine 1551-cysteine 1576, cysteine 1565-cysteine 1579, cysteine 1566-cysteine 1591, cysteine 1612-cysteine 1624, cysteine 1619-cysteine 1633, cysteine 1635-cysteine 1648, cysteine 1654-cysteine 1665, cysteine 1660-cysteine 1674, and cysteine 1676-cysteine 1689. A glycan (N-linked (GlcNAc...) asparagine) is linked at asparagine 1069. Residues 1072-1114 (DIDECRISPDLCGRGQCVNTPGDFECKCDEGYESGFMMMKNCM) enclose the EGF-like 16; calcium-binding domain. One can recognise an EGF-like 17; calcium-binding domain in the interval 1115–1156 (DIDECQRDPLLCRGGICHNTEGSYRCECPPGHQLSPNISACI). Serine 1137 is a glycosylation site (O-linked (Glc) serine). Asparagine 1151 is a glycosylation site (N-linked (GlcNAc...) asparagine). Residues 1157-1198 (DINECELSANLCPHGRCVNLIGKYQCACNPGYHPTHDRLFCV) form the EGF-like 18; calcium-binding domain. In terms of domain architecture, EGF-like 19; calcium-binding spans 1199 to 1239 (DIDECSIMNGGCETFCTNSDGSYECSCQPGFALMPDQRSCT). Residue serine 1220 is glycosylated (O-linked (Glc) serine). Residues 1240 to 1281 (DIDECEDNPNICDGGQCTNIPGEYRCLCYDGFMASEDMKTCV) enclose the EGF-like 20; calcium-binding domain. Positions 1282-1323 (DVNECDLNPNICLSGTCENTKGSFICHCDMGYSGKKGKTGCT) constitute an EGF-like 21; calcium-binding domain. A glycan (O-linked (Glc) serine) is linked at serine 1304. One can recognise an EGF-like 22; calcium-binding domain in the interval 1324 to 1364 (DINECEIGAHNCGRHAVCTNTAGSFKCSCSPGWIGDGIKCT). Serine 1347 carries O-linked (Glc) serine glycosylation. The EGF-like 23; calcium-binding domain maps to 1365–1405 (DLDECSNGTHMCSQHADCKNTMGSYRCLCKDGYTGDGFTCT). N-linked (GlcNAc...) asparagine glycosylation is present at asparagine 1371. An O-linked (Glc) serine glycan is attached at serine 1388. In terms of domain architecture, EGF-like 24; calcium-binding spans 1406 to 1447 (DLDECSENLNLCGNGQCLNAPGGYRCECDMGFVPSADGKACE). In terms of domain architecture, EGF-like 25; calcium-binding spans 1448 to 1488 (DIDECSLPNICVFGTCHNLPGLFRCECEIGYELDRSGGNCT). The N-linked (GlcNAc...) asparagine glycan is linked to asparagine 1486. The region spanning 1489-1529 (DVNECLDPTTCISGNCVNTPGSYTCDCPPDFELNPTRVGCV) is the EGF-like 26; calcium-binding domain. O-linked (Glc) serine glycosylation is present at serine 1510. The tract at residues 1530–2733 (DTRSGNCYLD…GYPKRGRKRR (1204 aa)) is C-terminal domain. The 58-residue stretch at 1534–1591 (GNCYLDIRPRGDNGDTACSNEIGVGVSKASCCCSLGKAWGTPCELCPSVNTSEYKILC) folds into the TB 6 domain. The Cell attachment site motif lies at 1543–1545 (RGD). A glycan (N-linked (GlcNAc...) asparagine) is linked at asparagine 1583. Positions 1608-1649 (DIDECQELPGLCQGGKCINTFGSFQCRCPTGYYLNEDTRVCD) constitute an EGF-like 27; calcium-binding domain. A glycan (O-linked (Glc) serine) is linked at serine 1630. Residues 1650–1690 (DVNECETPGICGPGTCYNTVGNYTCICPPDYMQVNGGNNCM) form the EGF-like 28; calcium-binding domain. N-linked (GlcNAc...) asparagine glycosylation is present at asparagine 1671. One can recognise a TB 7 domain in the interval 1695 to 1750 (SLCYRNYYADNQTCDGELLFNMTKKMCCCSYNIGRAWNKPCEQCPIPSTDEFATLC). Asparagine 1705 and asparagine 1715 each carry an N-linked (GlcNAc...) asparagine glycan. An EGF-like 29; calcium-binding domain is found at 1768 to 1809 (DIDECREIPGVCENGVCINMVGSFRCECPVGFFYNDKLLVCE). 40 disulfide bridges follow: cysteine 1772-cysteine 1784, cysteine 1779-cysteine 1793, cysteine 1795-cysteine 1808, cysteine 1814-cysteine 1826, cysteine 1820-cysteine 1835, cysteine 1837-cysteine 1849, cysteine 1855-cysteine 1867, cysteine 1862-cysteine 1876, cysteine 1878-cysteine 1891, cysteine 1897-cysteine 1907, cysteine 1902-cysteine 1916, cysteine 1918-cysteine 1930, cysteine 1936-cysteine 1949, cysteine 1944-cysteine 1958, cysteine 1960-cysteine 1973, cysteine 1979-cysteine 1991, cysteine 1986-cysteine 2000, cysteine 2002-cysteine 2013, cysteine 2019-cysteine 2031, cysteine 2026-cysteine 2040, cysteine 2042-cysteine 2055, cysteine 2063-cysteine 2085, cysteine 2072-cysteine 2098, cysteine 2086-cysteine 2101, cysteine 2087-cysteine 2113, cysteine 2133-cysteine 2144, cysteine 2139-cysteine 2153, cysteine 2155-cysteine 2166, cysteine 2172-cysteine 2183, cysteine 2178-cysteine 2192, cysteine 2194-cysteine 2206, cysteine 2212-cysteine 2223, cysteine 2219-cysteine 2232, cysteine 2234-cysteine 2247, cysteine 2253-cysteine 2267, cysteine 2260-cysteine 2276, cysteine 2278-cysteine 2291, cysteine 2297-cysteine 2309, cysteine 2304-cysteine 2318, and cysteine 2320-cysteine 2333. In terms of domain architecture, EGF-like 30; calcium-binding spans 1810-1850 (DIDECQNGPVCQRNAECINTAGSYRCDCKPGYRLTSTGQCN). Serine 1832 carries O-linked (Glc) serine glycosylation. Residues 1851–1892 (DRNECQEIPNICSHGQCIDTVGSFYCLCHTGFKTNVDQTMCL) enclose the EGF-like 31; calcium-binding domain. A glycan (O-linked (Glc) serine) is linked at serine 1873. One can recognise an EGF-like 32; calcium-binding domain in the interval 1893–1931 (DINECERDACGNGTCRNTIGSFNCRCNHGFILSHNNDCI). The N-linked (GlcNAc...) asparagine glycan is linked to asparagine 1904. O-linked (Glc) serine glycosylation is present at serine 1913. Positions 1932–1974 (DVDECATGNGNLCRNGQCVNTVGSFQCRCNEGYEVAPDGRTCV) constitute an EGF-like 33; calcium-binding domain. Residue serine 1955 is glycosylated (O-linked (Glc) serine). An EGF-like 34; calcium-binding domain is found at 1975-2014 (DINECVLDPGKCAPGTCQNLDGSYRCICPPGYSLQNDKCE). Residues 2015–2056 (DIDECVEEPEICALGTCSNTEGSFKCLCPEGFSLSSTGRRCQ) enclose the EGF-like 35; calcium-binding domain. A glycan (O-linked (Glc) serine) is linked at serine 2037. Residues 2061–2113 (SYCYAKFEGGKCSSPKSRNHSKQECCCALKGEGWGDPCELCPTEPDEAFRQIC) form the TB 8 domain. Asparagine 2079 carries an N-linked (GlcNAc...) asparagine glycan. The EGF-like 36; calcium-binding domain maps to 2129–2167 (DMDECKEPDVCRHGQCINTDGSYRCECPFGYILEGNECV). O-linked (Glc) serine glycosylation is present at serine 2150. In terms of domain architecture, EGF-like 37; calcium-binding spans 2168-2207 (DTDECSVGNPCGNGTCKNVIGGFECTCEEGFEPGPMMTCE). Asparagine 2180 carries N-linked (GlcNAc...) asparagine glycosylation. One can recognise an EGF-like 38; calcium-binding domain in the interval 2208–2248 (DINECAQNPLLCAFRCVNTYGSYECKCPVGYVLREDRRMCK). Residue serine 2229 is glycosylated (O-linked (Glc) serine). The 44-residue stretch at 2249-2292 (DEDECAEGKHDCTEKQMECKNLIGTYMCICGPGYQRRPDGEGCI) folds into the EGF-like 39; calcium-binding domain. In terms of domain architecture, EGF-like 40; calcium-binding spans 2293-2334 (DENECQTKPGICENGRCLNTLGSYTCECNDGFTASPTQDECL). Serine 2315 carries O-linked (Glc) serine glycosylation. In terms of domain architecture, TB 9 spans 2339-2392 (GYCFSEVLQNMCQIGSSNRNPVTKSECCCDGGRGWGPHCEICPFEGTVAYKKLC). The region spanning 2404 to 2445 (DIDECKVIHDVCRNGECVNDRGSYHCICKTGYTPDITGTACV) is the EGF-like 41; calcium-binding domain. Disulfide bonds link cysteine 2408–cysteine 2420, cysteine 2415–cysteine 2429, cysteine 2431–cysteine 2444, cysteine 2450–cysteine 2461, cysteine 2457–cysteine 2470, cysteine 2472–cysteine 2485, cysteine 2491–cysteine 2502, cysteine 2498–cysteine 2511, cysteine 2513–cysteine 2524, cysteine 2530–cysteine 2543, cysteine 2537–cysteine 2552, cysteine 2554–cysteine 2567, cysteine 2573–cysteine 2583, cysteine 2579–cysteine 2592, cysteine 2594–cysteine 2607, cysteine 2613–cysteine 2624, cysteine 2619–cysteine 2633, cysteine 2635–cysteine 2648, cysteine 2654–cysteine 2665, cysteine 2661–cysteine 2674, and cysteine 2676–cysteine 2688. One can recognise an EGF-like 42; calcium-binding domain in the interval 2446-2486 (DLNECNQAPKPCNFICKNTEGSYQCSCPKGYILQEDGRSCK). O-linked (Glc) serine glycosylation is present at serine 2467. One can recognise an EGF-like 43; calcium-binding domain in the interval 2487-2525 (DLDECATKQHNCQFLCVNTIGGFTCKCPPGFTQHHTACI). Positions 2526 to 2568 (DNNECTSDINLCGSKGVCQNTPGSFTCECQRGFSLDQSGASCE) constitute an EGF-like 44; calcium-binding domain. A glycan (O-linked (Glc) serine) is linked at serine 2549. Positions 2569–2608 (DVDECEGNHRCQHGCQNIIGGYRCSCPQGYLQHYQWNQCV) constitute an EGF-like 45; calcium-binding domain. Residues 2609–2649 (DENECLSAHVCGGASCHNTLGSYKCMCPTGFQYEQFSGGCQ) form the EGF-like 46; calcium-binding domain. Serine 2630 carries an O-linked (Glc) serine glycan. One can recognise an EGF-like 47; calcium-binding domain in the interval 2650–2689 (DINECGSSQAPCSYGCSNTEGGYLCGCPPGYFRIGQGHCV). Serine 2704, serine 2705, and serine 2711 each carry phosphoserine. The interval 2728 to 2747 (RGRKRRSTNETDASDIQDGS) is disordered. Residues asparagine 2736, asparagine 2752, and asparagine 2769 are each glycosylated (N-linked (GlcNAc...) asparagine).

The protein belongs to the fibrillin family. As to quaternary structure, interacts with COL16A1. Interacts with integrin alpha-V/beta-3. Interacts with ADAMTS10; this interaction promotes microfibril assembly. Interacts with THSD4; this interaction promotes fibril formation. Interacts (via N-terminal domain) with FBLN2 and FBLN5. Interacts with ELN. Forms a ternary complex with ELN and FBLN2 or FBLN5 and a significant interaction with ELN seen only in the presence of FBLN2 or FBLN5. Interacts (via N-terminal domain) with LTBP2 (via C-terminal domain) in a Ca(+2)-dependent manner. Interacts (via N-terminal domain) with LTBP1 (via C-terminal domain). Interacts with integrins ITGA5:ITGB1, ITGAV:ITGB3 and ITGAV:ITGB6. Interacts (via N-terminal domain) with BMP2, BMP4, BMP7, BMP10 and GDF5. Interacts (via N-terminal domain) with MFAP2 and MFAP5. Interacts with ADAMTSL5. Interacts with MFAP4. Interacts (via N-terminal domain) with TNFSF11 in a Ca(+2)-dependent manner. Interacts (via N-terminal domain) with EFEMP2; this interaction inhibits EFEMP2 binding to LOX and ELN. In terms of processing, cleavage of N- and C-terminus by furin is required for incorporation into the extracellular matrix and assembly into microfibrils. The C-terminus, which corresponds to the Asprosin chain, was initially thought to constitute a propeptide. Fibrillin-1 and Asprosin chains are still linked together during the secretion from cells, but are subsequently separated by furin, an essential step for incorporation of Fibrillin-1 into the nascent microfibrils. Post-translationally, forms intermolecular disulfide bonds either with other fibrillin-1 molecules or with other components of the microfibrils. O-glycosylated on serine residues by POGLUT2 and POGLUT3 which is necessary for efficient protein secretion. As to expression, strongly expressed during the first week of osteoblast differentiation. Secreted by white adipose tissue (at protein level).

The protein resides in the secreted. It is found in the extracellular space. It localises to the extracellular matrix. Its function is as follows. Structural component of the 10-12 nm diameter microfibrils of the extracellular matrix, which conveys both structural and regulatory properties to load-bearing connective tissues. Fibrillin-1-containing microfibrils provide long-term force bearing structural support. In tissues such as the lung, blood vessels and skin, microfibrils form the periphery of the elastic fiber, acting as a scaffold for the deposition of elastin. In addition, microfibrils can occur as elastin-independent networks in tissues such as the ciliary zonule, tendon, cornea and glomerulus where they provide tensile strength and have anchoring roles. Fibrillin-1 also plays a key role in tissue homeostasis through specific interactions with growth factors, such as the bone morphogenetic proteins (BMPs), growth and differentiation factors (GDFs) and latent transforming growth factor-beta-binding proteins (LTBPs), cell-surface integrins and other extracellular matrix protein and proteoglycan components. Regulates osteoblast maturation by controlling TGF-beta bioavailability and calibrating TGF-beta and BMP levels, respectively. Negatively regulates osteoclastogenesis by binding and sequestering an osteoclast differentiation and activation factor TNFSF11. This leads to disruption of TNFSF11-induced Ca(2+) signaling and impairment of TNFSF11-mediated nuclear translocation and activation of transcription factor NFATC1 which regulates genes important for osteoclast differentiation and function. Mediates cell adhesion via its binding to cell surface receptors integrins ITGAV:ITGB3 and ITGA5:ITGB1. Binds heparin and this interaction plays an important role in the assembly of microfibrils. Adipokine secreted by white adipose tissue that plays an important regulatory role in the glucose metabolism of liver, muscle and pancreas. Hormone that targets the liver in response to fasting to increase plasma glucose levels. Binds the olfactory receptor Olfr734 at the surface of hepatocytes and promotes hepatocyte glucose release by activating the protein kinase A activity in the liver, resulting in rapid glucose release into the circulation. May act as a regulator of adaptive thermogenesis by inhibiting browning and energy consumption, while increasing lipid deposition in white adipose tissue. Also acts as an orexigenic hormone that increases appetite: crosses the blood brain barrier and exerts effects on the hypothalamus. In the arcuate nucleus of the hypothalamus, asprosin directly activates orexigenic AgRP neurons and indirectly inhibits anorexigenic POMC neurons, resulting in appetite stimulation. Activates orexigenic AgRP neurons via binding to the olfactory receptor Olfr734. May also play a role in sperm motility in testis via interaction with Olfr734 receptor. The polypeptide is Fibrillin-1 (Mus musculus (Mouse)).